The primary structure comprises 286 residues: Shikimate dehydrogenase (NADP(+)) (286 aa).

Shikimate-binding positions include 20–22 (SLS) and serine 67. The active-site Proton acceptor is the lysine 71. Shikimate contacts are provided by asparagine 92 and aspartate 107. Residues 131–135 (GGGGA) and alanine 230 each bind NADP(+). Residue tyrosine 232 participates in shikimate binding. Glycine 253 provides a ligand contact to NADP(+).

Belongs to the shikimate dehydrogenase family. As to quaternary structure, homodimer.

It catalyses the reaction shikimate + NADP(+) = 3-dehydroshikimate + NADPH + H(+). Its pathway is metabolic intermediate biosynthesis; chorismate biosynthesis; chorismate from D-erythrose 4-phosphate and phosphoenolpyruvate: step 4/7. Its function is as follows. Involved in the biosynthesis of the chorismate, which leads to the biosynthesis of aromatic amino acids. Catalyzes the reversible NADPH linked reduction of 3-dehydroshikimate (DHSA) to yield shikimate (SA). The polypeptide is Shikimate dehydrogenase (NADP(+)) (Lactococcus lactis subsp. cremoris (strain SK11)).